The following is a 383-amino-acid chain: Lipoyl synthase, mitochondrial (383 aa).

The N-terminal 19 residues, 1–19, are a transit peptide targeting the mitochondrion; it reads MHASTLTRCMRVAQNARCL. Positions 69-97 are disordered; it reads DAAPGTKPSRKPNASNRKPKWLKAQPTQG. The [4Fe-4S] cluster site is built by C116, C121, C127, C147, C151, C154, and S362. The 220-residue stretch at 132-351 folds into the Radical SAM core domain; sequence KDGIATATIM…QKVAEQMGFL (220 aa).

Belongs to the radical SAM superfamily. Lipoyl synthase family. The cofactor is [4Fe-4S] cluster.

The protein resides in the mitochondrion. The catalysed reaction is [[Fe-S] cluster scaffold protein carrying a second [4Fe-4S](2+) cluster] + N(6)-octanoyl-L-lysyl-[protein] + 2 oxidized [2Fe-2S]-[ferredoxin] + 2 S-adenosyl-L-methionine + 4 H(+) = [[Fe-S] cluster scaffold protein] + N(6)-[(R)-dihydrolipoyl]-L-lysyl-[protein] + 4 Fe(3+) + 2 hydrogen sulfide + 2 5'-deoxyadenosine + 2 L-methionine + 2 reduced [2Fe-2S]-[ferredoxin]. It functions in the pathway protein modification; protein lipoylation via endogenous pathway; protein N(6)-(lipoyl)lysine from octanoyl-[acyl-carrier-protein]: step 2/2. In terms of biological role, catalyzes the radical-mediated insertion of two sulfur atoms into the C-6 and C-8 positions of the octanoyl moiety bound to the lipoyl domains of lipoate-dependent enzymes, thereby converting the octanoylated domains into lipoylated derivatives. The sequence is that of Lipoyl synthase, mitochondrial from Phytophthora infestans (strain T30-4) (Potato late blight agent).